A 461-amino-acid chain; its full sequence is Kynurenine 3-monooxygenase (461 aa).

Helical transmembrane passes span glycine 395–threonine 415 and isoleucine 432–isoleucine 452.

This sequence belongs to the aromatic-ring hydroxylase family. KMO subfamily. Requires FAD as cofactor.

Its subcellular location is the mitochondrion. It is found in the membrane. It carries out the reaction L-kynurenine + NADPH + O2 + H(+) = 3-hydroxy-L-kynurenine + NADP(+) + H2O. It participates in cofactor biosynthesis; NAD(+) biosynthesis; quinolinate from L-kynurenine: step 1/3. Its function is as follows. Catalyzes the hydroxylation of L-kynurenine (L-Kyn) to form 3-hydroxy-L-kynurenine (L-3OHKyn). Required for synthesis of quinolinic acid. The chain is Kynurenine 3-monooxygenase from Caenorhabditis briggsae.